We begin with the raw amino-acid sequence, 968 residues long: Translation initiation factor IF-2 (968 aa).

A compositionally biased stretch (low complexity) spans 305–319 (KPAAAAGAPGAPGAA). A disordered region spans residues 305-376 (KPAAAAGAPG…NDRDARPEST (72 aa)). The tr-type G domain maps to 468 to 635 (PRAPVVTVMG…QVLLQAEVLE (168 aa)). The segment at 477–484 (GHVDHGKT) is G1. A GTP-binding site is contributed by 477–484 (GHVDHGKT). Positions 502-506 (GITQH) are G2. Residues 523-526 (DTPG) form a G3 region. GTP is bound by residues 523–527 (DTPGH) and 577–580 (NKID). The interval 577 to 580 (NKID) is G4. The interval 613-615 (SAR) is G5.

It belongs to the TRAFAC class translation factor GTPase superfamily. Classic translation factor GTPase family. IF-2 subfamily.

It localises to the cytoplasm. In terms of biological role, one of the essential components for the initiation of protein synthesis. Protects formylmethionyl-tRNA from spontaneous hydrolysis and promotes its binding to the 30S ribosomal subunits. Also involved in the hydrolysis of GTP during the formation of the 70S ribosomal complex. The polypeptide is Translation initiation factor IF-2 (Polaromonas sp. (strain JS666 / ATCC BAA-500)).